A 371-amino-acid chain; its full sequence is Queuine tRNA-ribosyltransferase (371 aa).

Aspartate 90 serves as the catalytic Proton acceptor. Substrate contacts are provided by residues 90–94, aspartate 144, glutamine 188, and glycine 215; that span reads DSGGF. The interval 246-252 is RNA binding; the sequence is GVGTPED. Aspartate 265 serves as the catalytic Nucleophile. The RNA binding; important for wobble base 34 recognition stretch occupies residues 270 to 274; sequence TRNAR. Residues cysteine 303, cysteine 305, cysteine 308, and histidine 334 each coordinate Zn(2+).

The protein belongs to the queuine tRNA-ribosyltransferase family. Homodimer. Within each dimer, one monomer is responsible for RNA recognition and catalysis, while the other monomer binds to the replacement base PreQ1. Zn(2+) serves as cofactor.

The catalysed reaction is 7-aminomethyl-7-carbaguanine + guanosine(34) in tRNA = 7-aminomethyl-7-carbaguanosine(34) in tRNA + guanine. It participates in tRNA modification; tRNA-queuosine biosynthesis. Functionally, catalyzes the base-exchange of a guanine (G) residue with the queuine precursor 7-aminomethyl-7-deazaguanine (PreQ1) at position 34 (anticodon wobble position) in tRNAs with GU(N) anticodons (tRNA-Asp, -Asn, -His and -Tyr). Catalysis occurs through a double-displacement mechanism. The nucleophile active site attacks the C1' of nucleotide 34 to detach the guanine base from the RNA, forming a covalent enzyme-RNA intermediate. The proton acceptor active site deprotonates the incoming PreQ1, allowing a nucleophilic attack on the C1' of the ribose to form the product. After dissociation, two additional enzymatic reactions on the tRNA convert PreQ1 to queuine (Q), resulting in the hypermodified nucleoside queuosine (7-(((4,5-cis-dihydroxy-2-cyclopenten-1-yl)amino)methyl)-7-deazaguanosine). The protein is Queuine tRNA-ribosyltransferase of Neisseria meningitidis serogroup C / serotype 2a (strain ATCC 700532 / DSM 15464 / FAM18).